Reading from the N-terminus, the 380-residue chain is High affinity transport system protein p37 (380 aa).

The first 26 residues, methionine 1–serine 26, serve as a signal peptide directing secretion. Cysteine 27 carries the N-palmitoyl cysteine lipid modification. Cysteine 27 is lipidated: S-diacylglycerol cysteine. A disordered region spans residues asparagine 285–asparagine 304.

It localises to the cell membrane. Its function is as follows. P37 is part of a high-affinity transport system. This is High affinity transport system protein p37 (p37) from Mycoplasma pneumoniae (strain ATCC 29342 / M129 / Subtype 1) (Mycoplasmoides pneumoniae).